Consider the following 764-residue polypeptide: Acylamino-acid-releasing enzyme (764 aa).

Catalysis depends on charge relay system residues serine 618, aspartate 707, and histidine 739.

This sequence belongs to the peptidase S9C family. As to quaternary structure, homotetramer.

It localises to the cytoplasm. Its subcellular location is the nucleus. It carries out the reaction Cleavage of an N-acetyl or N-formyl amino acid from the N-terminus of a polypeptide.. Its activity is regulated as follows. Strongly inhibited by the serine protease inhibitor diisopropyl fluorophosphate. Catalyzes the hydrolysis of the N-terminal peptide bond of an N-acetylated peptide to generate an N-acetylated amino acid and a peptide with a free N-terminus. Can degrade the glycated RuBisCO (ribulose-1,5-bisphosphate carboxylase/oxygenase) protein but not the native protein. May be involved in the elimination of glycated proteins. Plays a homeostatic role in sustaining the cytoplasmic antioxidative system. May contribute to the elimination of the oxidized proteins in the cytoplasm. In Arabidopsis thaliana (Mouse-ear cress), this protein is Acylamino-acid-releasing enzyme.